Here is a 75-residue protein sequence, read N- to C-terminus: U-stichotoxin-Hau3a (75 aa).

The N-terminal stretch at 1–19 is a signal peptide; the sequence is MNHLIILVVAAVFLGMASA. Positions 20–26 are excised as a propeptide; that stretch reads EDVFHKR. 3 disulfide bridges follow: C31-C71, C33-C61, and C54-C72.

The protein belongs to the sea anemone sodium channel inhibitory toxin family. Type I subfamily. Contains 3 disulfide bonds.

It is found in the secreted. The protein localises to the nematocyst. Toxin that is lethal to crab. The sequence is that of U-stichotoxin-Hau3a from Heteractis aurora (Banded sea anemone).